The chain runs to 841 residues: MAQALSEEEFQRMQAQLLELRTNNYQLSDELRKNGVELTSLRQKVAYLDKEFSKAQKALSKSKKAQEVEVLLSENEMLQAKLHSQEEDFRLQNSTLMAEFSKLCSQMEQLEQENQQLKEGAAGAGVAQAGPLVDGELLRLQAENTALQKNVAALQERYGKEAGKFSAVSEGQGDPPGGLAPTVLAPMPLAEVELKWEMEKEEKRLLWEQLQGLESSKQAETSRLQEELAKLSEKLKKKQESFCRLQTEKETLFNDSRNKIEELQQRKEADHKAQLARTQKLQQELEAANQSLAELRDQRQGERLEHAAALRALQDQVSIQSADAQEQVEGLLAENNALRTSLAALEQIQTAKTQELNMLREQTTGLAAELQQQQAEYEDLMGQKDDLNSQLQESLRANSRLLEQLQEIGQEKEQLTQELQEARKSAEKRKAMLDELAMETLQEKSQHKEELGAVRLRHEKEVLGVRARYERELRELHEDKKRQEEELRGQIREEKARTRELETLQQTVEELQAQVHSMDGAKGWFERRLKEAEESLQQQQQEQEEALKQCREQHAAELKGKEEELQDVRDQLEQAQEERDCHLKTISSLKQEVKDTVDGQRILEKKGSAALKDLKRQLHLERKRADKLQERLQDILTNSKSRSGLEELVLSEMNSPSRTQTGDSSSISSFSYREILREKESSAVPARSLSSSPQAQPPRPAELSDEEVAELFQRLAETQQEKWMLEEKVKHLEVSSASMAEDLCRKSAIIETYVMDSRIDVSVAAGHTDRSGLGSVLRDLVKPGDENLREMNKKLQNMLEEQLTKNMHLHKDMEVLSQEIVRLSKECVGPPDPDLEPGETS.

A2 carries the post-translational modification N-acetylalanine. Coiled coils occupy residues 4–161 (ALSE…YGKE) and 208–641 (EQLQ…NSKS). Disordered stretches follow at residues 532-551 (AEES…KQCR) and 558-580 (LKGK…EERD). A phosphoserine mark is found at S655, S666, S668, S669, S688, S690, S691, and S692. The tract at residues 681-706 (SSAVPARSLSSSPQAQPPRPAELSDE) is disordered. Residues 682–694 (SAVPARSLSSSPQ) show a composition bias toward low complexity. Coiled-coil stretches lie at residues 701 to 735 (AELS…LEVS) and 785 to 814 (DENL…KDME).

In terms of assembly, interacts with GRIP1, GRIP2 and AMPA receptors. Interacts (via C-terminus) with MAPK8/JNK1 and MAP3K1/MEKK1; the interaction promotes MAP3K1-mediated phosphorylation of MAPK8. Interacts (via N-terminus) with RAB4A (in GTP-bound form). Interacts (via C-terminus) with STX12. In terms of processing, proteolytically cleaved by caspase-3. A minor C-terminal proteolytic fragment of 30 kDa is produced. Proteolytic cleavage is required for JNK signaling activation.

The protein localises to the early endosome membrane. It localises to the recycling endosome membrane. It is found in the cell projection. The protein resides in the axon. Its subcellular location is the dendrite. The protein localises to the synapse. In terms of biological role, regulates the endosomal recycling back to the neuronal plasma membrane, possibly by connecting early and late recycling endosomal domains and promoting segregation of recycling endosomes from early endosomal membranes. Involved in the localization of recycling endosomes to dendritic spines, thereby playing a role in the maintenance of dendritic spine morphology. Required for the activity-induced AMPA receptor recycling to dendrite membranes and for long-term potentiation and synaptic plasticity. Functions as a scaffold protein to facilitate MAP3K1/MEKK1-mediated activation of the JNK1 kinase by phosphorylation, possibly by bringing MAP3K1/MEKK1 and JNK1 in close proximity. The polypeptide is GRIP1-associated protein 1 (Homo sapiens (Human)).